Reading from the N-terminus, the 1343-residue chain is DNA-directed RNA polymerase subunit beta (1343 aa).

This sequence belongs to the RNA polymerase beta chain family. As to quaternary structure, the RNAP catalytic core consists of 2 alpha, 1 beta, 1 beta' and 1 omega subunit. When a sigma factor is associated with the core the holoenzyme is formed, which can initiate transcription.

The catalysed reaction is RNA(n) + a ribonucleoside 5'-triphosphate = RNA(n+1) + diphosphate. In terms of biological role, DNA-dependent RNA polymerase catalyzes the transcription of DNA into RNA using the four ribonucleoside triphosphates as substrates. The chain is DNA-directed RNA polymerase subunit beta from Shewanella frigidimarina (strain NCIMB 400).